A 417-amino-acid polypeptide reads, in one-letter code: RH-like protein IIR (417 aa).

The next 11 membrane-spanning stretches (helical) occupy residues 12 to 32 (CLPL…YFFT), 44 to 64 (LVAS…GFGF), 77 to 97 (VAFS…LDGF), 125 to 145 (ISVD…MVLV), 172 to 192 (IYVF…KPLP), 203 to 223 (TIPS…WPSF), 238 to 258 (VFNT…GSSL), 265 to 285 (ISMS…GTSC), 287 to 307 (LIPS…ISVG), 331 to 351 (NFSW…VRHT), and 358 to 378 (MIGF…TIAL).

This sequence belongs to the ammonium transporter (TC 2.A.49) family. Rh subfamily.

Its subcellular location is the membrane. Its function is as follows. May be part of an oligomeric complex which is likely to have a transport or channel function in the erythrocyte membrane. This chain is RH-like protein IIR, found in Pan troglodytes (Chimpanzee).